The following is a 4083-amino-acid chain: Dynein heavy chain, cytoplasmic (4083 aa).

Residues 1-1745 (MTDDQVAQAL…TIEQSCVSFC (1745 aa)) form a stem region. 3 coiled-coil regions span residues 127–166 (DAVV…FIEV), 381–402 (INQW…MRKR), and 801–821 (KLDL…VDQA). 4 AAA regions span residues 1746 to 1967 (YGFE…VLRN), 2026 to 2265 (SYLA…YKAD), 2373 to 2622 (SLES…WVRG), and 2716 to 2980 (TFAE…GNSQ). ATP-binding positions include 1784-1791 (GPAGTGKT), 2064-2071 (GDAGTGKT), 2412-2419 (GPPGSGKT), and 2754-2761 (GPNYSGKT). The stalk stretch occupies residues 2987–3294 (LTSLRRFQSL…RSIKLMESLT (308 aa)). Coiled-coil stretches lie at residues 3015–3085 (LEKL…NERR), 3223–3302 (LKEE…RWIK), and 3527–3607 (LEKE…VEDL). AAA regions lie at residues 3364–3592 (MVNP…EIAK) and 3748–3952 (LKSL…FLDH).

Belongs to the dynein heavy chain family. As to quaternary structure, consists of at least two heavy chains and a number of intermediate and light chains.

It is found in the cytoplasm. It localises to the cytoskeleton. Cytoplasmic dynein acts as a motor for the intracellular retrograde motility of vesicles and organelles along microtubules. Dynein has ATPase activity; the force-producing power stroke is thought to occur on release of ADP. Required to maintain uniform nuclear distribution in hyphae. May play an important role in the proper orientation of the mitotic spindle into the budding daughter cell yeast. Probably required for normal progression of the cell cycle. This Eremothecium gossypii (strain ATCC 10895 / CBS 109.51 / FGSC 9923 / NRRL Y-1056) (Yeast) protein is Dynein heavy chain, cytoplasmic (DYN1).